Consider the following 550-residue polypeptide: Hydroxylamine reductase (550 aa).

[2Fe-2S] cluster-binding residues include Cys3, Cys6, Cys18, and Cys25. Positions 249, 273, 317, 405, 433, 458, 492, and 494 each coordinate hybrid [4Fe-2O-2S] cluster. Cys405 is modified (cysteine persulfide).

This sequence belongs to the HCP family. [2Fe-2S] cluster is required as a cofactor. Requires hybrid [4Fe-2O-2S] cluster as cofactor.

The protein localises to the cytoplasm. It carries out the reaction A + NH4(+) + H2O = hydroxylamine + AH2 + H(+). In terms of biological role, catalyzes the reduction of hydroxylamine to form NH(3) and H(2)O. This chain is Hydroxylamine reductase, found in Enterobacter sp. (strain 638).